Here is a 622-residue protein sequence, read N- to C-terminus: Probable potassium transport system protein Kup 1 (622 aa).

12 helical membrane-spanning segments follow: residues 11–31 (LTLG…LYAV), 50–70 (ILSI…VTLV), 101–121 (VLLL…VITP), 137–157 (PAFN…LFWV), 168–188 (FFGP…VAQI), 215–235 (FIIL…YADL), 247–267 (WFAV…ALLL), 285–305 (ALLP…QALI), 337–357 (IYLP…VMIF), 366–386 (AYGI…FFVI), 393–413 (PLWL…AFWA), and 419–439 (LFDG…LMIT).

The protein belongs to the HAK/KUP transporter (TC 2.A.72) family.

The protein resides in the cell inner membrane. It catalyses the reaction K(+)(in) + H(+)(in) = K(+)(out) + H(+)(out). Its function is as follows. Transport of potassium into the cell. Likely operates as a K(+):H(+) symporter. The sequence is that of Probable potassium transport system protein Kup 1 from Albidiferax ferrireducens (strain ATCC BAA-621 / DSM 15236 / T118) (Rhodoferax ferrireducens).